The chain runs to 930 residues: MAAKLQIHAPYVLHALPRPLDRSDGLGRYFSGEVFGQKQGGKRKKRTELAVAIDGVAVYLYDILSSQVVTSYLVSPQSCFTCPPSSLRWRPASSKTVTRYTYVSVATGDSVLAKREIRLFREETLSTGNTVVACISRTICSDSPIVHIFTSSPRNFLTNVPGKDIPNHDLIIITANGSIFALNGETLEEKWQVSPSVLSREILSDSKLALQVDFVQQTSAADVADGLFGGKNDLFGVFQERIHRDGFNPDFFVVITSQSGADSANARHLHVLALPSEREARQTGKENVISVFVAPLAVEETCRSFQLDVRSGTLQAISNKALVTYQFANGIAKLENRLQVPGLSSYLRLSKTSVLTSATDSLSVYNPIYRSLQAAARLEPTDDTNGHACEFVSYLASRELAVAIRGGSLVVIQIEAPKNRTAKRRAEGLLTDAIRRGISRKIAFEKRTKPEHVSDSTILADAVPGSLSDPSWSEWQNKAMQADELLQNNDIQSWEELMAEVFKVPIKPDETADAEKQTAPNPVVKLPEWEWPSSRSDYARVDRRWVVYAINKVFGWEGQLESNTGRLTCRLPESSVLIYLVDAGHLSTSNVKSAFKDDVREVDKVEELIGEQLPIILAEVDPTMELLVGYLSGTQLGSSELVSSIKLLLCSLGLFEDGSRLPAVGDNTHIEQVTGQENEVVNMELDRAEEELQITEHYLDEHRTRGLGIAFSKLAACPAAETVKSLRRLFKPDEVLVLLNVLRAELIKDGWTTRYLDKINADQEDDAPPDASIQLIADLMSRCIDAVGLSGWMAADVMLSSSRTHQDSANFFSQFQAEISVALEGVMEAVRLKGVIAEAANYAKRARRALADSAKGKAMTVHMSAELPLGLKTDNKISTERVRSGGEIVARSSRQIGHFISKRRGIYSIHRISEEMLLGAAGPTVVQEAR.

The Nuclear localization signal motif lies at 434 to 441 (IRRGISRK).

It is found in the nucleus. This is an uncharacterized protein from Chaetomium thermophilum (strain DSM 1495 / CBS 144.50 / IMI 039719) (Thermochaetoides thermophila).